A 288-amino-acid polypeptide reads, in one-letter code: Ribosomal RNA small subunit methyltransferase A (288 aa).

S-adenosyl-L-methionine is bound by residues asparagine 37, leucine 39, glycine 64, glutamate 86, aspartate 112, and asparagine 131.

This sequence belongs to the class I-like SAM-binding methyltransferase superfamily. rRNA adenine N(6)-methyltransferase family. RsmA subfamily.

Its subcellular location is the cytoplasm. It catalyses the reaction adenosine(1518)/adenosine(1519) in 16S rRNA + 4 S-adenosyl-L-methionine = N(6)-dimethyladenosine(1518)/N(6)-dimethyladenosine(1519) in 16S rRNA + 4 S-adenosyl-L-homocysteine + 4 H(+). Specifically dimethylates two adjacent adenosines (A1518 and A1519) in the loop of a conserved hairpin near the 3'-end of 16S rRNA in the 30S particle. May play a critical role in biogenesis of 30S subunits. This is Ribosomal RNA small subunit methyltransferase A from Rhodospirillum rubrum (strain ATCC 11170 / ATH 1.1.1 / DSM 467 / LMG 4362 / NCIMB 8255 / S1).